The sequence spans 303 residues: UDP-3-O-acyl-N-acetylglucosamine deacetylase (303 aa).

3 residues coordinate Zn(2+): His-78, His-237, and Asp-241. His-264 acts as the Proton donor in catalysis.

The protein belongs to the LpxC family. Zn(2+) serves as cofactor.

It catalyses the reaction a UDP-3-O-[(3R)-3-hydroxyacyl]-N-acetyl-alpha-D-glucosamine + H2O = a UDP-3-O-[(3R)-3-hydroxyacyl]-alpha-D-glucosamine + acetate. It functions in the pathway glycolipid biosynthesis; lipid IV(A) biosynthesis; lipid IV(A) from (3R)-3-hydroxytetradecanoyl-[acyl-carrier-protein] and UDP-N-acetyl-alpha-D-glucosamine: step 2/6. In terms of biological role, catalyzes the hydrolysis of UDP-3-O-myristoyl-N-acetylglucosamine to form UDP-3-O-myristoylglucosamine and acetate, the committed step in lipid A biosynthesis. This chain is UDP-3-O-acyl-N-acetylglucosamine deacetylase, found in Pseudomonas fluorescens (strain Pf0-1).